A 321-amino-acid polypeptide reads, in one-letter code: GTP 3',8-cyclase (321 aa).

A Radical SAM core domain is found at 5 to 233 (SFNRVIDYIR…QGSSKIYTLE (229 aa)). Arg-14 contacts GTP. Residues Cys-21 and Cys-25 each contribute to the [4Fe-4S] cluster site. Residue Tyr-27 participates in S-adenosyl-L-methionine binding. Cys-28 provides a ligand contact to [4Fe-4S] cluster. Arg-64 contributes to the GTP binding site. Position 68 (Gly-68) interacts with S-adenosyl-L-methionine. Residue Ser-95 participates in GTP binding. Ser-119 is a binding site for S-adenosyl-L-methionine. Lys-155 is a GTP binding site. Residue Met-189 participates in S-adenosyl-L-methionine binding. [4Fe-4S] cluster is bound by residues Cys-249 and Cys-252. 254-256 (RIR) provides a ligand contact to GTP. Cys-266 serves as a coordination point for [4Fe-4S] cluster.

This sequence belongs to the radical SAM superfamily. MoaA family. As to quaternary structure, monomer and homodimer. The cofactor is [4Fe-4S] cluster.

It carries out the reaction GTP + AH2 + S-adenosyl-L-methionine = (8S)-3',8-cyclo-7,8-dihydroguanosine 5'-triphosphate + 5'-deoxyadenosine + L-methionine + A + H(+). It functions in the pathway cofactor biosynthesis; molybdopterin biosynthesis. Its function is as follows. Catalyzes the cyclization of GTP to (8S)-3',8-cyclo-7,8-dihydroguanosine 5'-triphosphate. In Helicobacter pylori (strain HPAG1), this protein is GTP 3',8-cyclase.